We begin with the raw amino-acid sequence, 348 residues long: Protein RecA (348 aa).

65–72 (GPESSGKT) is an ATP binding site.

This sequence belongs to the RecA family.

It is found in the cytoplasm. Its function is as follows. Can catalyze the hydrolysis of ATP in the presence of single-stranded DNA, the ATP-dependent uptake of single-stranded DNA by duplex DNA, and the ATP-dependent hybridization of homologous single-stranded DNAs. It interacts with LexA causing its activation and leading to its autocatalytic cleavage. The sequence is that of Protein RecA from Vibrio anguillarum (strain ATCC 68554 / 775) (Listonella anguillarum).